Here is a 598-residue protein sequence, read N- to C-terminus: NADH-ubiquinone oxidoreductase chain 5 (598 aa).

A run of 14 helical transmembrane segments spans residues 6–26 (LTLI…PPII), 32–52 (MILT…PLTI), 84–100 (YTVI…WSIM), 113–133 (MDKF…FISA), 136–156 (LLQL…LISW), 241–261 (TPVS…FLLI), 272–292 (LMLE…ALCA), 301–320 (IIAF…VGLN), 325–347 (AFLH…GSII), 370–390 (TTCM…AGFF), 409–429 (LMVT…LIIM), 456–476 (LAWG…PMKP), 478–498 (IFTM…ISLI), and 576–596 (LNSA…LSLT).

The protein belongs to the complex I subunit 5 family.

It is found in the mitochondrion inner membrane. It carries out the reaction a ubiquinone + NADH + 5 H(+)(in) = a ubiquinol + NAD(+) + 4 H(+)(out). In terms of biological role, core subunit of the mitochondrial membrane respiratory chain NADH dehydrogenase (Complex I) that is believed to belong to the minimal assembly required for catalysis. Complex I functions in the transfer of electrons from NADH to the respiratory chain. The immediate electron acceptor for the enzyme is believed to be ubiquinone. In Petromyzon marinus (Sea lamprey), this protein is NADH-ubiquinone oxidoreductase chain 5 (MT-ND5).